We begin with the raw amino-acid sequence, 851 residues long: DNA mismatch repair protein MutS (851 aa).

602–609 (GPNMSGKS) is an ATP binding site.

It belongs to the DNA mismatch repair MutS family.

This protein is involved in the repair of mismatches in DNA. It is possible that it carries out the mismatch recognition step. This protein has a weak ATPase activity. The chain is DNA mismatch repair protein MutS from Streptococcus pyogenes serotype M28 (strain MGAS6180).